The following is a 638-amino-acid chain: Chaperone protein DnaK (638 aa).

Thr197 is subject to Phosphothreonine; by autocatalysis. The segment at Ser600 to Lys638 is disordered. Positions Ala602–Ala614 are enriched in gly residues. A compositionally biased stretch (low complexity) spans Gly615–Asn624. The segment covering Asn625–Lys638 has biased composition (basic and acidic residues).

This sequence belongs to the heat shock protein 70 family.

In terms of biological role, acts as a chaperone. The polypeptide is Chaperone protein DnaK (Phocaeicola vulgatus (strain ATCC 8482 / DSM 1447 / JCM 5826 / CCUG 4940 / NBRC 14291 / NCTC 11154) (Bacteroides vulgatus)).